The primary structure comprises 463 residues: V-type proton ATPase subunit S1 (463 aa).

An N-terminal signal peptide occupies residues 1-32 (MMAATVVSRIRTGTRWAPVLWLLLSLVAVAAA). Positions 33–225 (VAAEQQVPLV…TAVRPSRVAR (193 aa)) are excised as a propeptide. The Lumenal segment spans residues 33-412 (VAAEQQVPLV…EQFSYASDCA (380 aa)). N-linked (GlcNAc...) asparagine glycans are attached at residues Asn-164, Asn-255, Asn-267, Asn-290, Asn-297, Asn-344, Asn-351, and Asn-399. Residues 413–433 (GFFSPGIWMGLLTTLFMLFIF) form a helical membrane-spanning segment. The Cytoplasmic portion of the chain corresponds to 434 to 463 (TYGLHMILSLKTMDRFDDRKGPTITLTQIV).

This sequence belongs to the vacuolar ATPase subunit S1 family. As to quaternary structure, accessory component of the multisubunit proton-transporting vacuolar (V)-ATPase protein pump. Interacts (via N-terminus) with ATP6AP2 (via N-terminus). Interacts with RNASEK. Interacts with TMEM106B (via C-terminus). In terms of processing, N-glycosylated. Expressed in brain (at protein level).

Its subcellular location is the endoplasmic reticulum membrane. The protein localises to the endoplasmic reticulum-Golgi intermediate compartment membrane. It is found in the cytoplasmic vesicle. The protein resides in the secretory vesicle. It localises to the synaptic vesicle membrane. Its subcellular location is the clathrin-coated vesicle membrane. Its function is as follows. Accessory subunit of the proton-transporting vacuolar (V)-ATPase protein pump, which is required for luminal acidification of secretory vesicles. Guides the V-type ATPase into specialized subcellular compartments, such as neuroendocrine regulated secretory vesicles or the ruffled border of the osteoclast, thereby regulating its activity. Involved in membrane trafficking and Ca(2+)-dependent membrane fusion. May play a role in the assembly of the V-type ATPase complex. In aerobic conditions, involved in intracellular iron homeostasis, thus triggering the activity of Fe(2+) prolyl hydroxylase (PHD) enzymes, and leading to HIF1A hydroxylation and subsequent proteasomal degradation. In islets of Langerhans cells, may regulate the acidification of dense-core secretory granules. In Rattus norvegicus (Rat), this protein is V-type proton ATPase subunit S1 (Atp6ap1).